The primary structure comprises 445 residues: MNANNTLDLTPHFALDGDQPFKDRRAMMPFRGAIPVAKEQLAQTWQEMINQTASPRKRLVYLHIPFCATHCTFCGFYQNRFNEDACAHYTDALIREIEMEADSVLHQSAPIHAVYFGGGTPSALSAHDLARIITTLREKLPLAPDCEITIEGRVLNFDAERIDACLDAGANRFSIGIQSFNSKIRKKMARTSDGPTAIAFMESLVKRDRAAVVCDLLFGLPGQDAQTWGEDLAIARDIGLDGVDLYALNVLSNTPLGKAVENGRTTVPSPAERRDLYLQGCDFMDDAGWRCISNSHWGRTTRERNLYNLLIKQGADCLAFGSGAGGSINGYSWMNERNLQTWHESVAAGKKPLMLIMRNAERNAQWRHTLQSGVETARVPLDELTPHAEKLAPLLAQWHQKGLSRDASTCLRLTNEGRFWASNILQSLNELIQVLNAPAIMREKP.

A Radical SAM core domain is found at 52–287 (TASPRKRLVY…LQGCDFMDDA (236 aa)). Tyr61 lines the S-adenosyl-L-methionine pocket. 2 residues coordinate [4Fe-4S] cluster: Cys67 and Cys71. Residue Phe73 coordinates S-adenosyl-L-methionine. Cys74 is a binding site for [4Fe-4S] cluster. Residues Gly118, 119–120 (GT), Glu151, Gln178, Arg190, and Asp215 contribute to the S-adenosyl-L-methionine site.

This sequence belongs to the anaerobic coproporphyrinogen-III oxidase family. ChuW/HutW subfamily. [4Fe-4S] cluster serves as cofactor.

It carries out the reaction 2 reduced [flavodoxin] + heme b + 2 S-adenosyl-L-methionine = anaerobilin + 2 oxidized [flavodoxin] + Fe(2+) + 5'-deoxyadenosine + L-methionine + S-adenosyl-L-homocysteine. Inhibited by exposure to molecular oxygen. Functionally, involved in heme degradation and iron utilization under anaerobic conditions. Catalyzes a radical-mediated mechanism facilitating iron liberation and the production of the tetrapyrrole product anaerobilin. Can use heme, mesoheme and deuteroheme as substrates. The protein is Anaerobilin synthase of Escherichia coli O157:H7.